The primary structure comprises 230 residues: Ubiquitin carboxyl-terminal hydrolase isozyme L3 (230 aa).

Residues 5–229 (RWLPLEANPE…LRFNAIALSA (225 aa)) form the UCH catalytic domain. Residues 8-13 (PLEANP) form an interaction with ubiquitin region. The Nucleophile role is filled by cysteine 95. Serine 130 carries the phosphoserine modification. Positions 152-159 (AHEGQTEA) are interaction with ubiquitin. Crossover loop which restricts access of large ubiquitin adducts to the active site. Catalysis depends on histidine 169, which acts as the Proton donor. The tract at residues 219-224 (ELRFNA) is interaction with ubiquitin.

Belongs to the peptidase C12 family. Preferentially binds diubiquitin; the interaction does not hydrolyze diubiquitin but, in vitro, inhibits the hydrolyzing activity on other substrates.

Its subcellular location is the cytoplasm. It catalyses the reaction Thiol-dependent hydrolysis of ester, thioester, amide, peptide and isopeptide bonds formed by the C-terminal Gly of ubiquitin (a 76-residue protein attached to proteins as an intracellular targeting signal).. Inhibited by monoubiquitin and diubiquitin. Deubiquitinating enzyme (DUB) that controls levels of cellular ubiquitin through processing of ubiquitin precursors and ubiquitinated proteins. Thiol protease that recognizes and hydrolyzes a peptide bond at the C-terminal glycine of either ubiquitin or NEDD8. Has a 10-fold preference for Arg and Lys at position P3, and exhibits a preference towards 'Lys-48'-linked ubiquitin chains. Deubiquitinates ENAC in apical compartments, thereby regulating apical membrane recycling. Indirectly increases the phosphorylation of IGFIR, AKT and FOXO1 and promotes insulin-signaling and insulin-induced adipogenesis. Required for stress-response retinal, skeletal muscle and germ cell maintenance. May be involved in working memory. Can hydrolyze UBB(+1), a mutated form of ubiquitin which is not effectively degraded by the proteasome. The sequence is that of Ubiquitin carboxyl-terminal hydrolase isozyme L3 (UCHL3) from Sus scrofa (Pig).